Consider the following 149-residue polypeptide: Large ribosomal subunit protein bL9 (149 aa).

This sequence belongs to the bacterial ribosomal protein bL9 family.

In terms of biological role, binds to the 23S rRNA. The polypeptide is Large ribosomal subunit protein bL9 (Histophilus somni (strain 129Pt) (Haemophilus somnus)).